A 332-amino-acid chain; its full sequence is NADH-quinone oxidoreductase subunit H (332 aa).

Helical transmembrane passes span 4–24 (FAFFALETLIKCIIIIAIFAS), 44–64 (IGPDMVGPFGLIQLVADMIKL), 78–98 (FIFAIAPLISAICAFVSLAAI), 120–140 (VALLFVIGTSGLCFYAVFLGG), 165–185 (VGALALIAIIMLVGSFSLVDI), 194–214 (FSWLIFKQPLAFVLFIIALFI), 255–275 (IAGAILVTLLFLGGFNSFWII), 279–299 (IMMIVKSSFIFFWYFWARAAF), and 312–332 (YLILIPLAVLNLLITALTVLL).

This sequence belongs to the complex I subunit 1 family. In terms of assembly, NDH-1 is composed of 14 different subunits. Subunits NuoA, H, J, K, L, M, N constitute the membrane sector of the complex.

The protein localises to the cell inner membrane. It catalyses the reaction a quinone + NADH + 5 H(+)(in) = a quinol + NAD(+) + 4 H(+)(out). In terms of biological role, NDH-1 shuttles electrons from NADH, via FMN and iron-sulfur (Fe-S) centers, to quinones in the respiratory chain. The immediate electron acceptor for the enzyme in this species is believed to be ubiquinone. Couples the redox reaction to proton translocation (for every two electrons transferred, four hydrogen ions are translocated across the cytoplasmic membrane), and thus conserves the redox energy in a proton gradient. This subunit may bind ubiquinone. This Campylobacter jejuni subsp. jejuni serotype O:2 (strain ATCC 700819 / NCTC 11168) protein is NADH-quinone oxidoreductase subunit H.